The sequence spans 354 residues: Probable L-ascorbate-6-phosphate lactonase UlaG (354 aa).

It belongs to the UlaG family. A divalent metal cation serves as cofactor.

The protein resides in the cytoplasm. It catalyses the reaction L-ascorbate 6-phosphate + H2O = 3-dehydro-L-gulonate 6-phosphate. It functions in the pathway cofactor degradation; L-ascorbate degradation; D-xylulose 5-phosphate from L-ascorbate: step 1/4. Its function is as follows. Probably catalyzes the hydrolysis of L-ascorbate-6-P into 3-keto-L-gulonate-6-P. Is essential for L-ascorbate utilization under anaerobic conditions. This chain is Probable L-ascorbate-6-phosphate lactonase UlaG, found in Salmonella heidelberg (strain SL476).